The sequence spans 1043 residues: Constitutive coactivator of PPAR-gamma-like protein 1 homolog (1043 aa).

Disordered regions lie at residues 353–497 (SMVP…HMQI) and 929–1043 (YGRG…NKEE). Polar residues-rich tracts occupy residues 362–375 (QMLN…QSRP) and 405–419 (SPIN…NHVD). Basic and acidic residues-rich tracts occupy residues 451–471 (TWDK…EQAK) and 951–964 (EVAK…EDSK). The tract at residues 801–1043 (VELATKVEKM…LEGAVANKEE (243 aa)) is RNA binding. A compositionally biased stretch (low complexity) spans 995-1010 (EARASSNSESALSSDS).

Belongs to the constitutive coactivator of PPAR-gamma family.

It localises to the cytoplasm. The protein resides in the cell membrane. In terms of biological role, may bee involved in the oxidative stress-induced survival signaling. Binds RNA. May participate in mRNA transport in the cytoplasm. The protein is Constitutive coactivator of PPAR-gamma-like protein 1 homolog (fam120a) of Xenopus tropicalis (Western clawed frog).